The sequence spans 49 residues: Protein YdfW (49 aa).

A disordered region spans residues 16 to 49 (PKADHPWLTRRTQSHQQVKPPKLPKKKPDPDKKD).

In terms of biological role, may be involved in H(2) production during fermentative growth. The chain is Protein YdfW (ydfW) from Escherichia coli (strain K12).